Here is a 462-residue protein sequence, read N- to C-terminus: Tryptophan dimethylallyltransferase ifgA (462 aa).

L-tryptophan-binding positions include Ile-83–Leu-84 and Glu-92. 3 residues coordinate substrate: Arg-103, Lys-189, and Tyr-191. L-tryptophan is bound by residues Tyr-193 and Arg-246. Substrate-binding residues include Arg-259, Lys-261, Tyr-263, Gln-345, and Tyr-347.

Belongs to the tryptophan dimethylallyltransferase family. Homodimer.

The enzyme catalyses L-tryptophan + dimethylallyl diphosphate = 4-(3-methylbut-2-enyl)-L-tryptophan + diphosphate. The protein operates within alkaloid biosynthesis; ergot alkaloid biosynthesis. In terms of biological role, tryptophan dimethylallyltransferase; part of the gene cluster that mediates the biosynthesis of isofumigaclavines, fungal ergot alkaloids. The tryptophan dimethylallyltransferase ifgA catalyzes the first step of ergot alkaloid biosynthesis by condensing dimethylallyl diphosphate (DMAP) and tryptophan to form 4-dimethylallyl-L-tryptophan. The second step is catalyzed by the methyltransferase ifgB that methylates 4-dimethylallyl-L-tryptophan in the presence of S-adenosyl-L-methionine, resulting in the formation of N-methyl-dimethylallyl-L-tryptophan. The catalase ifgD and the FAD-dependent oxidoreductase ifgC then transform N-methyl-dimethylallyl-L-tryptophan to chanoclavine-I which is further oxidized by ifgE in the presence of NAD(+), resulting in the formation of chanoclavine-I aldehyde. The chanoclavine-I aldehyde reductases ifgG and/or fgaOx3 reduce chanoclavine-I aldehyde to dihydrochanoclavine-I aldehyde that spontaneously dehydrates to form 6,8-dimethyl-6,7-didehydroergoline. The festuclavine dehydrogenases ifgF1 and/or ifgF2 then catalyze the reduction of 6,8-dimethyl-6,7-didehydroergoline to form festuclavine. Hydrolysis of festuclavine by a yet undetermined cytochrome P450 monooxygenase (called ifgH) then leads to the formation of isofumigaclavine B which is in turn acetylated by ifgI to isofumigaclavine A. Penicillium roqueforti has interestingly at least two sets of genes for the consumption of chanoclavine-I aldehyde on three different loci, the OYEs ifgG/fgaOx3 and the festuclavine synthase homologs ifgF1/ifgF2. The reason for the duplication of these genes is unclear, probably to ensure the conversion of chanoclavine-I aldehyde by differential gene expression under various environmental conditions. The sequence is that of Tryptophan dimethylallyltransferase ifgA from Penicillium roqueforti (strain FM164).